Here is a 215-residue protein sequence, read N- to C-terminus: Pyrrolidone-carboxylate peptidase (215 aa).

Catalysis depends on residues Glu80, Cys143, and His167.

The protein belongs to the peptidase C15 family. Homotetramer.

The protein localises to the cytoplasm. The enzyme catalyses Release of an N-terminal pyroglutamyl group from a polypeptide, the second amino acid generally not being Pro.. Its function is as follows. Removes 5-oxoproline from various penultimate amino acid residues except L-proline. The polypeptide is Pyrrolidone-carboxylate peptidase (Bacillus cereus (strain ATCC 10987 / NRS 248)).